A 298-amino-acid chain; its full sequence is Protein FAM221A (298 aa).

A compositionally biased stretch (polar residues) spans 241 to 257 (SSPETLTDVGTSSQVSS). Residues 241 to 263 (SSPETLTDVGTSSQVSSLRRPEE) form a disordered region.

It belongs to the FAM221 family.

The protein is Protein FAM221A (FAM221A) of Homo sapiens (Human).